Here is a 344-residue protein sequence, read N- to C-terminus: MKQTKTKYGKMKQMVSNLKLPDYRYEQLTKAIFHQRIDNFDDIHILPKALRMSLVNEFGKNVSSVIPVFSQDSKQARKLLFELTDGERIEAVGLKYKQGWESFCISSQCGCGFGCRFCATGSAGFKRNLTADEITDQLLYFYFNNHRLNSISFMGMGEAFANPELFDAVKILTDQNLFGLSQRRITISTIGIIPGIQRLTKKFPQVNLAFSLHSPFESQRSDLMPINKRFPLNEVMKTLDEHIIHTGRRVFIAYIMLEGINDSKEHAEAVVGLLKNRGSWEHLYHIDLIPYNSTDKTTFKFQSSSAIKQFCSTLKKAGISATVRTQFGSEISAACGQLCYENEL.

Residue E90 is the Proton acceptor of the active site. A Radical SAM core domain is found at K97 to E330. A disulfide bridge links C104 with C335. Residues C111, C115, and C118 each contribute to the [4Fe-4S] cluster site. Residues G157–E158, S188, S211–H213, and N292 contribute to the S-adenosyl-L-methionine site. Residue C335 is the S-methylcysteine intermediate of the active site.

This sequence belongs to the radical SAM superfamily. RlmN family. Cfr subfamily. [4Fe-4S] cluster serves as cofactor.

The protein resides in the cytoplasm. The enzyme catalyses adenosine(2503) in 23S rRNA + 2 reduced [2Fe-2S]-[ferredoxin] + 2 S-adenosyl-L-methionine = 8-methyladenosine(2503) in 23S rRNA + 5'-deoxyadenosine + L-methionine + 2 oxidized [2Fe-2S]-[ferredoxin] + S-adenosyl-L-homocysteine. In terms of biological role, specifically methylates position 8 of adenine 2503 in 23S rRNA. Confers resistance to some classes of antibiotics. This chain is Ribosomal RNA large subunit methyltransferase Cfr, found in Clostridium botulinum (strain Loch Maree / Type A3).